A 258-amino-acid polypeptide reads, in one-letter code: UPF0246 protein Jann_0444 (258 aa).

Belongs to the UPF0246 family.

The polypeptide is UPF0246 protein Jann_0444 (Jannaschia sp. (strain CCS1)).